A 403-amino-acid chain; its full sequence is Ribosomal RNA large subunit methyltransferase I (403 aa).

The region spanning 9 to 88 (YPRLVLSKGR…ESIDIAFFTR (80 aa)) is the PUA domain.

The protein belongs to the methyltransferase superfamily. RlmI family.

It localises to the cytoplasm. It carries out the reaction cytidine(1962) in 23S rRNA + S-adenosyl-L-methionine = 5-methylcytidine(1962) in 23S rRNA + S-adenosyl-L-homocysteine + H(+). Its function is as follows. Specifically methylates the cytosine at position 1962 (m5C1962) of 23S rRNA. This chain is Ribosomal RNA large subunit methyltransferase I, found in Salmonella choleraesuis (strain SC-B67).